The chain runs to 406 residues: Zinc finger protein CONSTANS-LIKE 6 (406 aa).

Residues Cys-17, Cys-20, Cys-40, and His-45 each coordinate Zn(2+). The B box-type; atypical zinc-finger motif lies at 17–59; it reads CDSCVKRRARWYCAADDAFLCHACDGSVHSANPLARRHERVRL. The interval 63–95 is disordered; sequence SAGKYRHASPPHQATWHQGFTRKARTPRGGKKS. Positions 82 to 95 are enriched in basic residues; it reads FTRKARTPRGGKKS. Positions 357-399 constitute a CCT domain; that stretch reads REARVSRYREKRRTRLFSKKIRYEVRKLNAEKRPRMKGRFVKR.

Belongs to the CONSTANS family.

It is found in the nucleus. In Arabidopsis thaliana (Mouse-ear cress), this protein is Zinc finger protein CONSTANS-LIKE 6 (COL6).